The chain runs to 148 residues: MKVLIILGLVLLSVMVQGKVFERCELARTLKRFGLDGYRGISLANWMCLAKWESDYNTRATNYNPGDQSTDYGIFQINSHYWCNNGRTPGAVNACHISCNALLQDDITEAVACAKRVVRDPQGIRAWVAWKAHCQNRDVSQYVQGCGV.

Residues Met-1–Gly-18 form the signal peptide. Residues Lys-19–Val-148 enclose the C-type lysozyme domain. Cystine bridges form between Cys-24/Cys-146, Cys-48/Cys-134, Cys-83/Cys-99, and Cys-95/Cys-113. Residues Glu-53 and Asp-71 contribute to the active site.

The protein belongs to the glycosyl hydrolase 22 family. In terms of assembly, monomer.

It carries out the reaction Hydrolysis of (1-&gt;4)-beta-linkages between N-acetylmuramic acid and N-acetyl-D-glucosamine residues in a peptidoglycan and between N-acetyl-D-glucosamine residues in chitodextrins.. Lysozymes have primarily a bacteriolytic function; those in tissues and body fluids are associated with the monocyte-macrophage system and enhance the activity of immunoagents. In Callithrix jacchus (White-tufted-ear marmoset), this protein is Lysozyme C (LYZ).